The chain runs to 287 residues: Acetylglutamate kinase (287 aa).

Substrate-binding positions include 70–71 (GG), Arg92, and Asn184.

It belongs to the acetylglutamate kinase family. ArgB subfamily.

Its subcellular location is the cytoplasm. The catalysed reaction is N-acetyl-L-glutamate + ATP = N-acetyl-L-glutamyl 5-phosphate + ADP. It participates in amino-acid biosynthesis; L-arginine biosynthesis; N(2)-acetyl-L-ornithine from L-glutamate: step 2/4. Its function is as follows. Catalyzes the ATP-dependent phosphorylation of N-acetyl-L-glutamate. This chain is Acetylglutamate kinase, found in Ruegeria pomeroyi (strain ATCC 700808 / DSM 15171 / DSS-3) (Silicibacter pomeroyi).